Reading from the N-terminus, the 532-residue chain is E3 ubiquitin-protein ligase rnf8-B (532 aa).

One can recognise an FHA domain in the interval 30–84 (VTMGRGLGVTYQLKPTLCPLMISRTHCLFKQNARDEWTVTDNKSLNGVWRNKERL). The interval 127–209 (SLIRPLPGKT…VETDTVSPTQ (83 aa)) is disordered. Residues 169–178 (VSRDGEDSAK) show a composition bias toward basic and acidic residues. Residues 377 to 415 (CIICSEHFIEAVTLNCAHSFCSYCIKSWRKRKEECPICR) form an RING-type zinc finger.

It belongs to the RNF8 family. Homodimer. Forms a E2-E3 ubiquitin ligase complex composed of the rnf8 homodimer and a E2 heterodimer of ube2n and ube2v2.

It is found in the nucleus. It catalyses the reaction S-ubiquitinyl-[E2 ubiquitin-conjugating enzyme]-L-cysteine + [acceptor protein]-L-lysine = [E2 ubiquitin-conjugating enzyme]-L-cysteine + N(6)-ubiquitinyl-[acceptor protein]-L-lysine.. The protein operates within protein modification; protein ubiquitination. E3 ubiquitin-protein ligase that plays a key role in DNA damage signaling via 2 distinct roles: by mediating the 'Lys-63'-linked ubiquitination of histones H2A and H2AX and promoting the recruitment of DNA repair proteins at double-strand breaks (DSBs) sites, and by catalyzing 'Lys-48'-linked ubiquitination to remove target proteins from DNA damage sites. Following DNA DSBs, it is recruited to the sites of damage by ATM-phosphorylated mdc1 and catalyzes the 'Lys-63'-linked ubiquitination of histones H2A and H2AX, thereby promoting the formation of tp53bp1 and brca1 ionizing radiation-induced foci (IRIF). H2A ubiquitination also mediates the ATM-dependent transcriptional silencing at regions flanking DSBs in cis, a mechanism to avoid collision between transcription and repair intermediates. Also catalyzes the formation of 'Lys-48'-linked polyubiquitin chains, leading to degradation of substrate proteins. In addition to its function in damage signaling, also plays a role in higher-order chromatin structure by mediating extensive chromatin decondensation. The protein is E3 ubiquitin-protein ligase rnf8-B of Xenopus laevis (African clawed frog).